The primary structure comprises 379 residues: Alanine racemase (379 aa).

Lysine 41 serves as the catalytic Proton acceptor; specific for D-alanine. Lysine 41 is subject to N6-(pyridoxal phosphate)lysine. A substrate-binding site is contributed by arginine 138. Residue tyrosine 260 is the Proton acceptor; specific for L-alanine of the active site. Methionine 319 is a substrate binding site.

It belongs to the alanine racemase family. Pyridoxal 5'-phosphate is required as a cofactor.

The enzyme catalyses L-alanine = D-alanine. The protein operates within amino-acid biosynthesis; D-alanine biosynthesis; D-alanine from L-alanine: step 1/1. In terms of biological role, catalyzes the interconversion of L-alanine and D-alanine. May also act on other amino acids. This chain is Alanine racemase (alr), found in Rhizobium meliloti (strain 1021) (Ensifer meliloti).